The following is a 1544-amino-acid chain: Protein mahjong (1544 aa).

The interval 1 to 110 is disordered; it reads MSEGSGSENA…AAADRRQATK (110 aa). Residues 10–35 are compositionally biased toward low complexity; it reads AAAAEAAAEAEAATEAALMAEAVAVA. Acidic residues predominate over residues 38–91; the sequence is SDEEEQPEAEDMPEQAGDNQEEDAAEQQDGGEPEADEDADADDAMSVENAENES. Phosphoserine is present on residues S565 and S569. A LisH domain is found at 912–944; it reads NKQQLYQLIFEHLESNGLSQTAQMLQREVGLPL. 2 disordered regions span residues 946-973 and 987-1059; these read TPTT…SRNR and GNGD…LAED. At S955 the chain carries Phosphoserine. Residues 961 to 971 show a composition bias toward low complexity; the sequence is SLPSGSSSLSR. Polar residues predominate over residues 1016-1027; sequence PNFSSLNTTQTP. 2 short sequence motifs (DWD box) span residues 1302–1309 and 1338–1345; these read VLWDVRSG and EVWDLRTF. 2 disordered regions span residues 1447 to 1475 and 1487 to 1544; these read KSER…ENTF and LRNL…SSDD. Acidic residues-rich tracts occupy residues 1451–1467 and 1495–1535; these read SEEE…EDGS and NDDE…DVLE.

The protein belongs to the VPRBP/DCAF1 family. In terms of assembly, component of the CUL4-RBX1-DDB1-DCAF1 E3 ubiquitin-protein ligase complex. Interacts with l(2)gl.

Its subcellular location is the nucleus. The protein operates within protein modification; protein ubiquitination. Functionally, probable substrate recognition component of tsome E3 ubiquitin-protein ligase complex. Plays a key role in cell competition via its interaction with l(2)gl. This Drosophila melanogaster (Fruit fly) protein is Protein mahjong (mahj).